The primary structure comprises 194 residues: Insertion element IS136 uncharacterized 21.2 kDa protein (194 aa).

A disordered region spans residues 73-103 (SCDRACAPTPGRDPPVSSLPNSRQPARQNPR). Residues 90–103 (SLPNSRQPARQNPR) are compositionally biased toward polar residues.

The chain is Insertion element IS136 uncharacterized 21.2 kDa protein from Agrobacterium tumefaciens (strain T37).